Here is a 165-residue protein sequence, read N- to C-terminus: P2Y purinoceptor 4 (165 aa).

A helical membrane pass occupies residues 1–16 (SDTLYVLSLPTLVYYY). Residues 17–30 (AARNHWPFGTGFCK) lie on the Extracellular side of the membrane. Residues 31-51 (FVRFLFYWNLYCSVLFLTCIS) form a helical membrane-spanning segment. Over 52–74 (VHRYMGICHPLRALRWGRPRFAS) the chain is Cytoplasmic. A helical membrane pass occupies residues 75 to 95 (LLCLAVWLVVAGCLVPNLFFV). Over 96 to 124 (TTSPNGTTILCHDTTRPEEFDHYVHFSSA) the chain is Extracellular. Asn-100 carries an N-linked (GlcNAc...) asparagine glycan. The helical transmembrane segment at 125–145 (VMVLLFGLPFLVTLVCYGLMA) threads the bilayer. The Cytoplasmic portion of the chain corresponds to 146–165 (RRLYRPLPGAGQSSSRLRSL).

Belongs to the G-protein coupled receptor 1 family.

The protein resides in the cell membrane. Functionally, receptor for UTP and UDP coupled to G-proteins that activate a phosphatidylinositol-calcium second messenger system. The sequence is that of P2Y purinoceptor 4 (P2RY4) from Cricetulus griseus (Chinese hamster).